The primary structure comprises 348 residues: 4-hydroxy-3-methylbut-2-en-1-yl diphosphate synthase (flavodoxin) (348 aa).

[4Fe-4S] cluster contacts are provided by Cys-263, Cys-266, Cys-298, and Glu-305.

It belongs to the IspG family. [4Fe-4S] cluster serves as cofactor.

The enzyme catalyses (2E)-4-hydroxy-3-methylbut-2-enyl diphosphate + oxidized [flavodoxin] + H2O + 2 H(+) = 2-C-methyl-D-erythritol 2,4-cyclic diphosphate + reduced [flavodoxin]. It functions in the pathway isoprenoid biosynthesis; isopentenyl diphosphate biosynthesis via DXP pathway; isopentenyl diphosphate from 1-deoxy-D-xylulose 5-phosphate: step 5/6. Converts 2C-methyl-D-erythritol 2,4-cyclodiphosphate (ME-2,4cPP) into 1-hydroxy-2-methyl-2-(E)-butenyl 4-diphosphate. This chain is 4-hydroxy-3-methylbut-2-en-1-yl diphosphate synthase (flavodoxin), found in Dehalococcoides mccartyi (strain CBDB1).